The following is a 363-amino-acid chain: Protein Wnt-5b (363 aa).

Residues Met1–Ser21 form the signal peptide. A disulfide bridge connects residues Cys87 and Cys98. N-linked (GlcNAc...) asparagine glycans are attached at residues Asn97 and Asn103. 10 disulfide bridges follow: Cys137/Cys145, Cys147/Cys165, Cys221/Cys235, Cys223/Cys230, Cys292/Cys323, Cys308/Cys318, Cys322/Cys362, Cys338/Cys353, Cys340/Cys350, and Cys345/Cys346. A lipid anchor (O-palmitoleoyl serine; by PORCN) is attached at Ser227. N-linked (GlcNAc...) asparagine glycosylation is found at Asn295 and Asn309.

The protein belongs to the Wnt family. In terms of processing, palmitoleoylation is required for efficient binding to frizzled receptors. Depalmitoleoylation leads to Wnt signaling pathway inhibition.

The protein localises to the secreted. It is found in the extracellular space. It localises to the extracellular matrix. Functionally, ligand for members of the frizzled family of seven transmembrane receptors. Can activate or inhibit canonical Wnt signaling, depending on receptor context. Required during embryogenesis for extension of the primary anterior-posterior axis. Regulates convergent extension movements and hypaxial myogenesis during gastrulation via activation of non-canonical Wnt signaling. The protein is Protein Wnt-5b (wnt5b) of Danio rerio (Zebrafish).